The following is a 183-amino-acid chain: MKNNSIRTVVATGIGAALFIIICIFVNIPIFGNTSIQLQYAVQVLFSVIFGSRSIIGFFMGFIGQVLKDGIQYGDISWAWVLASGITGLVIGLFGKKYDVTMGKFSVMSMIWFNLAQALGLLIAYGVVTPIGDKIQFAQAWSYLYAQSFVAGVANFITIAIGGTLLLAIYASSRTQSGSLTKG.

5 helical membrane passes run 11-31 (ATGI…IPIF), 44-64 (VLFS…GFIG), 74-94 (GDIS…IGLF), 111-131 (IWFN…VTPI), and 149-169 (FVAG…LLAI).

The protein belongs to the UPF0397 family.

Its subcellular location is the cell membrane. The chain is UPF0397 protein stu0306/stu0307 from Streptococcus thermophilus (strain ATCC BAA-250 / LMG 18311).